The following is a 417-amino-acid chain: Putative F-box protein At4g21240 (417 aa).

Acidic residues predominate over residues 1 to 12 (MDRREEEEEETG). The interval 1-25 (MDRREEEEEETGYGEKGTRNQSKED) is disordered. The span at 16-25 (KGTRNQSKED) shows a compositional bias: basic and acidic residues. The region spanning 30–76 (GKIFELIPLDMIPDILLRLPAKSAVRFRIVSKLWLSITTRPYFIRSF) is the F-box domain.

The protein is Putative F-box protein At4g21240 of Arabidopsis thaliana (Mouse-ear cress).